A 1115-amino-acid polypeptide reads, in one-letter code: Carbamoyl phosphate synthase large chain (1115 aa).

A carboxyphosphate synthetic domain region spans residues 1-407 (MPRRTDLHHV…ALGKVMRSLE (407 aa)). Residues R134, R174, G180, G181, E213, I215, E220, G246, V247, H248, Q290, and E304 each contribute to the ATP site. In terms of domain architecture, ATP-grasp 1 spans 138–333 (KDIVAKAGGE…IAKIAAKLAI (196 aa)). Positions 290, 304, and 306 each coordinate Mg(2+). Residues Q290, E304, and N306 each coordinate Mn(2+). The segment at 408 to 559 (TTRAGFWTAP…ELDPAAETEV (152 aa)) is oligomerization domain. Residues 560-965 (APQTERPKVL…AFAKSQTAAY (406 aa)) form a carbamoyl phosphate synthetic domain region. In terms of domain architecture, ATP-grasp 2 spans 693–884 (GDLLSAAGLP…LAKACARIML (192 aa)). The ATP site is built by R729, R768, L770, E775, G800, I801, H802, S803, Q843, and E855. Q843, E855, and N857 together coordinate Mg(2+). Residues Q843, E855, and N857 each contribute to the Mn(2+) site. One can recognise an MGS-like domain in the interval 966–1113 (GSLPAQGTVF…QELHRVIGGV (148 aa)). The tract at residues 966–1115 (GSLPAQGTVF…LHRVIGGVER (150 aa)) is allosteric domain.

Belongs to the CarB family. Composed of two chains; the small (or glutamine) chain promotes the hydrolysis of glutamine to ammonia, which is used by the large (or ammonia) chain to synthesize carbamoyl phosphate. Tetramer of heterodimers (alpha,beta)4. Mg(2+) serves as cofactor. Mn(2+) is required as a cofactor.

The catalysed reaction is hydrogencarbonate + L-glutamine + 2 ATP + H2O = carbamoyl phosphate + L-glutamate + 2 ADP + phosphate + 2 H(+). The enzyme catalyses hydrogencarbonate + NH4(+) + 2 ATP = carbamoyl phosphate + 2 ADP + phosphate + 2 H(+). The protein operates within amino-acid biosynthesis; L-arginine biosynthesis; carbamoyl phosphate from bicarbonate: step 1/1. It participates in pyrimidine metabolism; UMP biosynthesis via de novo pathway; (S)-dihydroorotate from bicarbonate: step 1/3. In terms of biological role, large subunit of the glutamine-dependent carbamoyl phosphate synthetase (CPSase). CPSase catalyzes the formation of carbamoyl phosphate from the ammonia moiety of glutamine, carbonate, and phosphate donated by ATP, constituting the first step of 2 biosynthetic pathways, one leading to arginine and/or urea and the other to pyrimidine nucleotides. The large subunit (synthetase) binds the substrates ammonia (free or transferred from glutamine from the small subunit), hydrogencarbonate and ATP and carries out an ATP-coupled ligase reaction, activating hydrogencarbonate by forming carboxy phosphate which reacts with ammonia to form carbamoyl phosphate. This is Carbamoyl phosphate synthase large chain from Mycobacterium bovis (strain ATCC BAA-935 / AF2122/97).